A 135-amino-acid chain; its full sequence is Protein PsiE homolog (135 aa).

A run of 4 helical transmembrane segments spans residues V13–L33, Y54–V74, H82–V102, and P107–A127.

Belongs to the PsiE family.

The protein resides in the cell inner membrane. In Edwardsiella ictaluri (strain 93-146), this protein is Protein PsiE homolog.